The chain runs to 201 residues: Recombination protein RecR (201 aa).

The segment at Cys-57–Cys-72 adopts a C4-type zinc-finger fold. Residues Gly-81 to Pro-176 form the Toprim domain.

It belongs to the RecR family.

Functionally, may play a role in DNA repair. It seems to be involved in an RecBC-independent recombinational process of DNA repair. It may act with RecF and RecO. The polypeptide is Recombination protein RecR (Serratia proteamaculans (strain 568)).